The following is a 144-amino-acid chain: Large ribosomal subunit protein uL15 (144 aa).

The disordered stretch occupies residues 1–54; the sequence is MRLNTLSPAAGAKHAPKRVGRGMGSGLGKTAGRGHKGQKSRSGGGVRPGFEGGQ. Gly residues-rich tracts occupy residues 21–31 and 42–52; these read RGMGSGLGKTA and SGGGVRPGFEG.

The protein belongs to the universal ribosomal protein uL15 family. In terms of assembly, part of the 50S ribosomal subunit.

Functionally, binds to the 23S rRNA. The chain is Large ribosomal subunit protein uL15 from Shewanella oneidensis (strain ATCC 700550 / JCM 31522 / CIP 106686 / LMG 19005 / NCIMB 14063 / MR-1).